A 42-amino-acid chain; its full sequence is MRDIKTYLSVAPVLSTLWFGALAGLLIEINRFFPDALTFPFF.

Residues 7–27 traverse the membrane as a helical segment; that stretch reads YLSVAPVLSTLWFGALAGLLI.

Belongs to the PsaJ family.

It localises to the plastid. The protein resides in the chloroplast thylakoid membrane. Its function is as follows. May help in the organization of the PsaE and PsaF subunits. The polypeptide is Photosystem I reaction center subunit IX (Platanus occidentalis (Sycamore)).